Here is a 696-residue protein sequence, read N- to C-terminus: Serotransferrin (696 aa).

Transferrin-like domains lie at 6–332 (VRWC…NLRE) and 346–672 (VRWC…NLRK). Intrachain disulfides connect Cys9/Cys47 and Cys19/Cys38. Dimethylated arginine is present on Arg23. An N-linked (GlcNAc...) asparagine glycan is attached at Asn25. Fe(3+) is bound by residues Asp62 and Tyr94. Cystine bridges form between Cys117-Cys198, Cys157-Cys173, Cys160-Cys181, Cys170-Cys183, and Cys231-Cys245. Thr119, Arg123, Ala125, and Gly126 together coordinate hydrogencarbonate. Residue Tyr192 participates in Fe(3+) binding. His253 is a binding site for Fe(3+). 11 disulfides stabilise this stretch: Cys343–Cys605, Cys349–Cys381, Cys359–Cys372, Cys406–Cys682, Cys423–Cys646, Cys456–Cys532, Cys480–Cys673, Cys490–Cys504, Cys501–Cys515, Cys572–Cys586, and Cys624–Cys629. A Phosphoserine modification is found at Ser374. Positions 396 and 431 each coordinate Fe(3+). Hydrogencarbonate is bound by residues Thr458, Arg462, Ala464, and Gly465. Asn497 carries an N-linked (GlcNAc...) asparagine glycan. Tyr526 contributes to the Fe(3+) binding site. His594 contacts Fe(3+). A Phosphoserine modification is found at Ser674.

The protein belongs to the transferrin family. In terms of assembly, monomer. Part of a complex composed of SLC40A1/ferroportin, TF/transferrin and HEPH/hephaestin that transfers iron from cells to transferrin. Expressed by the liver and secreted in plasma.

The protein resides in the secreted. Functionally, transferrins are iron binding transport proteins which can bind two Fe(3+) ions in association with the binding of an anion, usually bicarbonate. It is responsible for the transport of iron from sites of absorption and heme degradation to those of storage and utilization. Serum transferrin may also have a further role in stimulating cell proliferation. This Sus scrofa (Pig) protein is Serotransferrin (TF).